Consider the following 351-residue polypeptide: Phosphoribosylformylglycinamidine cyclo-ligase (351 aa).

It belongs to the AIR synthase family.

The protein resides in the cytoplasm. The enzyme catalyses 2-formamido-N(1)-(5-O-phospho-beta-D-ribosyl)acetamidine + ATP = 5-amino-1-(5-phospho-beta-D-ribosyl)imidazole + ADP + phosphate + H(+). Its pathway is purine metabolism; IMP biosynthesis via de novo pathway; 5-amino-1-(5-phospho-D-ribosyl)imidazole from N(2)-formyl-N(1)-(5-phospho-D-ribosyl)glycinamide: step 2/2. The protein is Phosphoribosylformylglycinamidine cyclo-ligase of Idiomarina loihiensis (strain ATCC BAA-735 / DSM 15497 / L2-TR).